A 180-amino-acid chain; its full sequence is Ribulose bisphosphate carboxylase small subunit, chloroplastic 2 (180 aa).

The N-terminal 54 residues, 1 to 54, are a transit peptide targeting the chloroplast; that stretch reads MASMMSNAAVVGRTTPAQASMVAPFTGLKSVSAFPVTKKSNDITSIASNGGRVQ.

The protein belongs to the RuBisCO small chain family. In terms of assembly, heterohexadecamer of 8 large and 8 small subunits.

It localises to the plastid. Its subcellular location is the chloroplast. RuBisCO catalyzes two reactions: the carboxylation of D-ribulose 1,5-bisphosphate, the primary event in carbon dioxide fixation, as well as the oxidative fragmentation of the pentose substrate. Both reactions occur simultaneously and in competition at the same active site. Although the small subunit is not catalytic it is essential for maximal activity. This Mesembryanthemum crystallinum (Common ice plant) protein is Ribulose bisphosphate carboxylase small subunit, chloroplastic 2.